Here is a 317-residue protein sequence, read N- to C-terminus: Protoheme IX farnesyltransferase (317 aa).

9 consecutive transmembrane segments (helical) span residues 43–63 (PISV…AGAT), 65–85 (PVSG…CAGA), 119–139 (ALYW…NLNP), 140–160 (IAWI…SLWL), 168–188 (IVIG…AVTG), 195–215 (VLIA…LAIF), 238–258 (LNWL…IYFV), 261–281 (WGLV…ALSV), and 292–312 (AWVL…SMMV).

This sequence belongs to the UbiA prenyltransferase family. Protoheme IX farnesyltransferase subfamily. In terms of assembly, interacts with CtaA.

The protein resides in the cell membrane. It carries out the reaction heme b + (2E,6E)-farnesyl diphosphate + H2O = Fe(II)-heme o + diphosphate. Its pathway is porphyrin-containing compound metabolism; heme O biosynthesis; heme O from protoheme: step 1/1. Its function is as follows. Converts heme B (protoheme IX) to heme O by substitution of the vinyl group on carbon 2 of heme B porphyrin ring with a hydroxyethyl farnesyl side group. The polypeptide is Protoheme IX farnesyltransferase (Desulforudis audaxviator (strain MP104C)).